We begin with the raw amino-acid sequence, 349 residues long: Microbial Terpene synthase-like protein 1 (349 aa).

D98, D102, N243, and S247 together coordinate Mg(2+). Residues 98 to 102 (DDILD) carry the DDXXD motif motif.

It belongs to the terpene synthase family. It depends on Mg(2+) as a cofactor.

It participates in secondary metabolite biosynthesis; terpenoid biosynthesis. Its function is as follows. Sesquiterpene synthase converting farnesyl diphosphate to six sesquiterpenes, with beta-elemene, delta-cadinene and an unidentified oxygenated sesquiterpene as the major products. Has no diterpene synthase activity. The chain is Microbial Terpene synthase-like protein 1 from Selaginella moellendorffii (Spikemoss).